The following is a 455-amino-acid chain: MSKLFLDELPESLSRKIGTVVRVLPSSLEIFEELYKYALNENSNDRSGRHKKPRIDVSSDLLKTDEISETNTIFKLEGVSVLSPLRKKLDLVFYLSNVDGSPVITLLKGNDRELSIYQLNKNIKMASFLPVPEKPNLIYLFMTYTSCEDNKFSEPVVMTLNKENTLNQFKNLGLLDSNVTDFEKCVEYIRKQAILTGFKISNPFVNSTLVDTDAEKINSFHLQCHRGTKEGTLYFLPDHIIFGFKKPILLFDASDIESITYSSITRLTFNASLVTKDGEKYEFSMIDQTEYAKIDDYVKRKQMKDKSMSEELKAKSKSKGQATDGTADQPSILQEATRQMQDEKKAGVFSDDDEENDQNFEAESDLSDGSGQESSDGAEDGEEAEEDDEEDDEEEDKKGQSALNRDNSFASINGQPEQELQYKEFKEPLELEDIPIEIGNDDDEDDEDGSGVEYD.

S2 carries the N-acetylserine modification. Positions 2–67 are dimeric region; it reads SKLFLDELPE…SSDLLKTDEI (66 aa). 2 consecutive PH domains span residues 68-200 and 217-301; these read SETN…GFKI and INSF…VKRK. A double PH domain region spans residues 68–301; it reads SETNTIFKLE…AKIDDYVKRK (234 aa). Positions 305-314 are enriched in basic and acidic residues; sequence DKSMSEELKA. Residues 305 to 455 are disordered; that stretch reads DKSMSEELKA…DEDGSGVEYD (151 aa). Polar residues predominate over residues 319–339; it reads KGQATDGTADQPSILQEATRQ. Acidic residues-rich tracts occupy residues 350–366 and 376–395; these read SDDDEENDQNFEAESDL and DGAEDGEEAEEDDEEDDEEE. The span at 402–418 shows a compositional bias: polar residues; sequence ALNRDNSFASINGQPEQ. S408 and S411 each carry phosphoserine. Residues 420-429 show a composition bias toward basic and acidic residues; sequence LQYKEFKEPL. Positions 430 to 455 are enriched in acidic residues; it reads ELEDIPIEIGNDDDEDDEDGSGVEYD. S450 carries the post-translational modification Phosphoserine.

Belongs to the RTT106 family. Interacts with the SWI/SNF, RSC and HIR complexes. Interacts with RLF2, SIR4, YTA7 and histones H3 and H4.

It is found in the nucleus. The protein localises to the chromosome. Its function is as follows. Histones H3 and H4 chaperone involved in the nucleosome formation and heterochromatin silencing. Required for the deposition of H3K56ac-carrying H3-H4 complex onto newly-replicated DNA. Plays a role in the transcriptional regulation of the cell-cycle dependent histone genes by directly recruiting the SWI/SNF and RSC chromatin remodeling complexes to the histone genes in a cell cycle dependent manner. In cooperation with HIR and ASF1, creates a repressive structure at the core histone gene promoter and contributes to their repression outside of S phase. Involved in regulation of Ty1 transposition. This chain is Histone chaperone RTT106 (RTT106), found in Saccharomyces cerevisiae (strain YJM789) (Baker's yeast).